Here is a 350-residue protein sequence, read N- to C-terminus: Autophagy-related protein 3 (350 aa).

Positions 85–166 (NFAGDAGLEE…EEDDEAIIRD (82 aa)) are flexible region. Residues 97–171 (VDDGDEFKGS…AIIRDTDASG (75 aa)) form a disordered region. The segment covering 102–113 (EFKGSKGDDDGW) has biased composition (basic and acidic residues). Residues 146 to 161 (DDDDDIPDMEDEEDDE) show a composition bias toward acidic residues. Catalysis depends on C244, which acts as the Glycyl thioester intermediate. Positions 248–326 (PVMKTLLDRA…DQEVAIRVDQ (79 aa)) are handle region. Residues K262 and K267 each carry the N6-acetyllysine modification.

The protein belongs to the ATG3 family. Monomer. Interacts with ATG8 through an intermediate thioester bond through the C-terminal Gly of ATG8. Also interacts with the 40 amino acid C-terminal region of the E1-like ATG7 enzyme. Also interacts with the ATG12-ATG5 conjugate. Interacts with HAT1. Acetylated by HAT1 at Lys-262 and Lys-267, which affects the interaction with ATG8 and prevents autophagy during both appressorium development and nutrient starvation.

The protein localises to the preautophagosomal structure. It localises to the cytoplasm. Functionally, E2 conjugating enzyme required for the cytoplasm to vacuole transport (Cvt) and autophagy. Required for selective autophagic degradation of the nucleus (nucleophagy) as well as for mitophagy which contributes to regulate mitochondrial quantity and quality by eliminating the mitochondria to a basal level to fulfill cellular energy requirements and preventing excess ROS production. Responsible for the E2-like covalent binding of phosphatidylethanolamine to the C-terminal Gly of ATG8. The ATG12-ATG5 conjugate plays a role of an E3 and promotes the transfer of ATG8 from ATG3 to phosphatidylethanolamine (PE). This step is required for the membrane association of ATG8. The formation of the ATG8-phosphatidylethanolamine conjugate is essential for autophagy and for the cytoplasm to vacuole transport (Cvt). The ATG8-PE conjugate mediates tethering between adjacent membranes and stimulates membrane hemifusion, leading to expansion of the autophagosomal membrane during autophagy. Plays a role in appressorium formation and pathogenicity. The sequence is that of Autophagy-related protein 3 from Pyricularia oryzae (strain 70-15 / ATCC MYA-4617 / FGSC 8958) (Rice blast fungus).